Reading from the N-terminus, the 278-residue chain is uncharacterized protein (278 aa).

Residues 1 to 55 (MKIRERFSMVDLPVLIITAAIIGHDKYKAFHAGANDILQKPYHYSEFMARIQNLI) enclose the Response regulatory domain.

This is an uncharacterized protein from Bacillus subtilis (strain 168).